The primary structure comprises 470 residues: Box C/D snoRNA protein 1 (470 aa).

Residues 1–70 (MEFAAENEGK…EEGSGQRPEE (70 aa)) form a disordered region. The residue at position 25 (S25) is a Phosphoserine. Over residues 41–51 (EFGGGEEGTGL) the composition is skewed to gly residues. Residues K79, K108, K118, K138, K143, K153, K162, K173, K183, and K200 each participate in a glycyl lysine isopeptide (Lys-Gly) (interchain with G-Cter in SUMO2) cross-link. Zn(2+)-binding residues include C220, C223, C232, C235, C240, C244, H248, and C254. An HIT-type zinc finger spans residues 220 to 254 (CETCGTEEAKYRCPRCMRYSCSLPCVKKHKAELTC). K459 participates in a covalent cross-link: Glycyl lysine isopeptide (Lys-Gly) (interchain with G-Cter in SUMO2).

Belongs to the BCD1 family. In terms of assembly, interacts with FBL, SNU13, NOP58, NUFIP1, RUVBL1, RUVBL2 and TAF9. Interacts (via HIT-type zinc finger) with the RUVBL1/RUVBL2 complex in the presence of ADP.

Its function is as follows. Required for box C/D snoRNAs accumulation involved in snoRNA processing, snoRNA transport to the nucleolus and ribosome biogenesis. The chain is Box C/D snoRNA protein 1 (ZNHIT6) from Homo sapiens (Human).